A 161-amino-acid polypeptide reads, in one-letter code: SsrA-binding protein (161 aa).

This sequence belongs to the SmpB family.

The protein localises to the cytoplasm. Required for rescue of stalled ribosomes mediated by trans-translation. Binds to transfer-messenger RNA (tmRNA), required for stable association of tmRNA with ribosomes. tmRNA and SmpB together mimic tRNA shape, replacing the anticodon stem-loop with SmpB. tmRNA is encoded by the ssrA gene; the 2 termini fold to resemble tRNA(Ala) and it encodes a 'tag peptide', a short internal open reading frame. During trans-translation Ala-aminoacylated tmRNA acts like a tRNA, entering the A-site of stalled ribosomes, displacing the stalled mRNA. The ribosome then switches to translate the ORF on the tmRNA; the nascent peptide is terminated with the 'tag peptide' encoded by the tmRNA and targeted for degradation. The ribosome is freed to recommence translation, which seems to be the essential function of trans-translation. The sequence is that of SsrA-binding protein from Psychromonas ingrahamii (strain DSM 17664 / CCUG 51855 / 37).